The following is a 323-amino-acid chain: uncharacterized protein (323 aa).

2 consecutive transmembrane segments (helical) span residues 232–252 (LASYAGILMSGTGFLYMFIVL) and 267–287 (SLIVIQLLFSGIVLLILGVIG).

This sequence belongs to the glycosyltransferase 2 family. GtrB subfamily.

The protein localises to the cell membrane. This is an uncharacterized protein from Bacillus subtilis (strain 168).